Here is a 212-residue protein sequence, read N- to C-terminus: MNSQQCVIIAIAGASASGKSLIAKTIFDELRRDLGTDQIGVINEDAYYRDQSHLSMDERVLTNYDHPKALDHQLLCTHLQLLKSGEAVDIPCYSYTEHTRIAETLTMTPKKVIILEGILLLTDPKLRALMDASVFMDTPLDICFLRRLTRDVAERGRTMESVISQYKKTVRPMFLQFIEPSKQYADIIVPRGGKNRIATDILKTRIQHLLAK.

Residue 13 to 20 (GASASGKS) participates in ATP binding.

This sequence belongs to the uridine kinase family.

Its subcellular location is the cytoplasm. It carries out the reaction uridine + ATP = UMP + ADP + H(+). The enzyme catalyses cytidine + ATP = CMP + ADP + H(+). It functions in the pathway pyrimidine metabolism; CTP biosynthesis via salvage pathway; CTP from cytidine: step 1/3. The protein operates within pyrimidine metabolism; UMP biosynthesis via salvage pathway; UMP from uridine: step 1/1. This Shewanella baltica (strain OS223) protein is Uridine kinase.